We begin with the raw amino-acid sequence, 133 residues long: Adenosine 5'-monophosphoramidase hnt1 (133 aa).

In terms of domain architecture, HIT spans 4–107 (IFCKIVKGDI…IPKPNEEYGL (104 aa)). AMP is bound by residues 29-30 (DI), asparagine 81, 87-89 (HQF), and 94-96 (HFH). A Histidine triad motif motif is present at residues 92 to 96 (HVHFH). The Tele-AMP-histidine intermediate role is filled by histidine 94.

This sequence belongs to the HINT family. In terms of assembly, homodimer. Requires Mg(2+) as cofactor.

It localises to the nucleus. The catalysed reaction is adenosine 5'-phosphoramidate + H2O = AMP + NH4(+). Hydrolyzes adenosine 5'-monophosphoramidate substrates such as AMP-morpholidate, AMP-N-alanine methyl ester, AMP-alpha-acetyl lysine methyl ester and AMP-NH2. This chain is Adenosine 5'-monophosphoramidase hnt1 (hnt1), found in Schizosaccharomyces pombe (strain 972 / ATCC 24843) (Fission yeast).